The following is a 290-amino-acid chain: Nucleoid occlusion protein (290 aa).

Residues 153-172 (EALAQRLGKGQSTIANKLRL) constitute a DNA-binding region (H-T-H motif).

It belongs to the ParB family.

It localises to the cytoplasm. The protein localises to the nucleoid. Effects nucleoid occlusion by binding relatively nonspecifically to DNA and preventing the assembly of the division machinery in the vicinity of the nucleoid, especially under conditions that disturb the cell cycle. It helps to coordinate cell division and chromosome segregation by preventing the formation of the Z ring through the nucleoid, which would cause chromosome breakage. The sequence is that of Nucleoid occlusion protein from Bacillus cereus (strain AH187).